The sequence spans 213 residues: Small ribosomal subunit protein eS6 (213 aa).

It belongs to the eukaryotic ribosomal protein eS6 family.

The polypeptide is Small ribosomal subunit protein eS6 (Sulfolobus acidocaldarius (strain ATCC 33909 / DSM 639 / JCM 8929 / NBRC 15157 / NCIMB 11770)).